A 156-amino-acid chain; its full sequence is ATP synthase subunit b (156 aa).

Residues 11 to 31 (AIAFVLFVLFCMKYVWPPLMA) traverse the membrane as a helical segment.

It belongs to the ATPase B chain family. As to quaternary structure, F-type ATPases have 2 components, F(1) - the catalytic core - and F(0) - the membrane proton channel. F(1) has five subunits: alpha(3), beta(3), gamma(1), delta(1), epsilon(1). F(0) has three main subunits: a(1), b(2) and c(10-14). The alpha and beta chains form an alternating ring which encloses part of the gamma chain. F(1) is attached to F(0) by a central stalk formed by the gamma and epsilon chains, while a peripheral stalk is formed by the delta and b chains.

It localises to the cell inner membrane. In terms of biological role, f(1)F(0) ATP synthase produces ATP from ADP in the presence of a proton or sodium gradient. F-type ATPases consist of two structural domains, F(1) containing the extramembraneous catalytic core and F(0) containing the membrane proton channel, linked together by a central stalk and a peripheral stalk. During catalysis, ATP synthesis in the catalytic domain of F(1) is coupled via a rotary mechanism of the central stalk subunits to proton translocation. Component of the F(0) channel, it forms part of the peripheral stalk, linking F(1) to F(0). This chain is ATP synthase subunit b, found in Shigella boydii serotype 18 (strain CDC 3083-94 / BS512).